Consider the following 163-residue polypeptide: UPF0763 protein C8J_0930 (163 aa).

The protein belongs to the UPF0763 family.

The chain is UPF0763 protein C8J_0930 from Campylobacter jejuni subsp. jejuni serotype O:6 (strain 81116 / NCTC 11828).